We begin with the raw amino-acid sequence, 713 residues long: Nuclear poly(A) polymerase 1 (713 aa).

Residues 91–93, 103–106, aspartate 159, tyrosine 229, and 238–239 contribute to the ATP site; these read FGS, ADID, and GI. Mg(2+) contacts are provided by aspartate 104, aspartate 106, and aspartate 159. Residues 480–555 are disordered; sequence FVFPGGVRPS…TLTDQPRNSK (76 aa). A compositionally biased stretch (low complexity) spans 507 to 526; it reads SSTSSAPAATTTTTEMSSES.

The protein belongs to the poly(A) polymerase family. As to quaternary structure, monomer. Forms a complex with cleavage and polyadenylation specificity factor (CPSF) subunit PAPS4. It depends on Mg(2+) as a cofactor. Mn(2+) serves as cofactor. As to expression, expressed in stems, cotyledons, hypocotyls, radicle, leaves, and, to a lower extent, in roots (including primary and secondary roots as well as root tips) and flowers. In radicle, roots and leaves, mainly present in vascular tissues.

It is found in the nucleus. The catalysed reaction is RNA(n) + ATP = RNA(n)-3'-adenine ribonucleotide + diphosphate. Essential protein. Polymerase that creates the 3'-poly(A) tail of mRNA's. Also required for the endoribonucleolytic cleavage reaction at some polyadenylation sites. May acquire specificity through interaction with a cleavage and polyadenylation specificity factor (CPSF) at its C-terminus. The protein is Nuclear poly(A) polymerase 1 of Arabidopsis thaliana (Mouse-ear cress).